Consider the following 491-residue polypeptide: MALQFQLNQTTPQTVTTDCVIVGIYADKTLSPTAKTLDAASGGRITALTARGDLTGKSGTSALLHDLNGVTAPRVLVVGLGEADKFGAGQYIKAVGNAVRALKDAPVTHALLTLSELPVKDRNAAWNIHQAVIAADHAAYRYTATLGTSRKKAEESGLITLAIHGQETSGLTLGQAIAEGVEYARALGNLPPNICTPAYLAETTAHFAATHPGATCEILDESNMEALGMGALLAVARGSANRPRLIVLKWNGGGDARPYVLVGKGITFDTGGVNLKTQGGIEEMKYDMCGGAAVIGTFVAAVKVRLPLNLIVIVPAVENAIDGNAYRPSDVITSMSGKTIEVGNTDAEGRLILCDALTYAERFKPEALIDVATLTGACMIALGRAATGLMTHHDDLANELLTAGEHVHDRAWRLPLWDEYQGLLDSTFADVYNIGGRWGGAITAGCFLSRFTEGQRWAHLDIAGSASNEGKRGMATGRPVGLLTQWLVDRC.

The Mn(2+) site is built by K264 and D269. Residue K276 is part of the active site. D287, D346, and E348 together coordinate Mn(2+). The active site involves R350.

The protein belongs to the peptidase M17 family. Requires Mn(2+) as cofactor.

It is found in the cytoplasm. It carries out the reaction Release of an N-terminal amino acid, Xaa-|-Yaa-, in which Xaa is preferably Leu, but may be other amino acids including Pro although not Arg or Lys, and Yaa may be Pro. Amino acid amides and methyl esters are also readily hydrolyzed, but rates on arylamides are exceedingly low.. The enzyme catalyses Release of an N-terminal amino acid, preferentially leucine, but not glutamic or aspartic acids.. In terms of biological role, presumably involved in the processing and regular turnover of intracellular proteins. Catalyzes the removal of unsubstituted N-terminal amino acids from various peptides. This chain is Probable cytosol aminopeptidase, found in Xylella fastidiosa (strain Temecula1 / ATCC 700964).